A 125-amino-acid chain; its full sequence is Transposase for transposon Tn554 (125 aa).

Its function is as follows. One of three proteins encoded by transposon Tn554 required for its transposition. The sequence is that of Transposase for transposon Tn554 (tnpC1) from Staphylococcus aureus (strain Mu50 / ATCC 700699).